The chain runs to 319 residues: HPr kinase/phosphorylase (319 aa).

Active-site residues include His144 and Lys165. 159-166 (GKSGIGKS) contributes to the ATP binding site. Ser166 lines the Mg(2+) pocket. Asp183 functions as the Proton acceptor; for phosphorylation activity. Proton donor; for dephosphorylation activity in the catalytic mechanism. An important for the catalytic mechanism of both phosphorylation and dephosphorylation region spans residues 207–216 (MEIRGLGVIN). A Mg(2+)-binding site is contributed by Glu208. Arg249 is a catalytic residue. An important for the catalytic mechanism of dephosphorylation region spans residues 270–275 (PVRPGR).

Belongs to the HPrK/P family. In terms of assembly, homohexamer. It depends on Mg(2+) as a cofactor.

The catalysed reaction is [HPr protein]-L-serine + ATP = [HPr protein]-O-phospho-L-serine + ADP + H(+). It catalyses the reaction [HPr protein]-O-phospho-L-serine + phosphate + H(+) = [HPr protein]-L-serine + diphosphate. In terms of biological role, catalyzes the ATP- as well as the pyrophosphate-dependent phosphorylation of a specific serine residue in HPr, a phosphocarrier protein of the phosphoenolpyruvate-dependent sugar phosphotransferase system (PTS). HprK/P also catalyzes the pyrophosphate-producing, inorganic phosphate-dependent dephosphorylation (phosphorolysis) of seryl-phosphorylated HPr (P-Ser-HPr). In Geobacter sulfurreducens (strain ATCC 51573 / DSM 12127 / PCA), this protein is HPr kinase/phosphorylase.